Reading from the N-terminus, the 55-residue chain is Large ribosomal subunit protein bL33 (55 aa).

Positions methionine 1–leucine 11 are enriched in basic and acidic residues. Residues methionine 1–threonine 24 form a disordered region. Over residues threonine 14 to threonine 24 the composition is skewed to polar residues.

The protein belongs to the bacterial ribosomal protein bL33 family.

In Burkholderia multivorans (strain ATCC 17616 / 249), this protein is Large ribosomal subunit protein bL33.